Reading from the N-terminus, the 597-residue chain is Dynein intermediate chain 3, ciliary (597 aa).

WD repeat units lie at residues 159–210 (EIKR…KPEF), 213–253 (KPVS…QAVE), 260–301 (SHHD…EPTE), 314–354 (ENAQ…PPEK), 361–400 (EHIG…SSIM), 404–444 (YHMS…KDPT), and 449–488 (VSDD…CTMQ). Disordered regions lie at residues 512-546 (RQRE…VAAA) and 562-597 (AAQQ…EKEG). Acidic residues predominate over residues 528-542 (QDDDEEGGPDEEEDL). The segment covering 584–597 (GSEKKDTENGEKEG) has biased composition (basic and acidic residues).

The protein belongs to the dynein intermediate chain family. As to quaternary structure, consists of at least two heavy chains (alpha and beta), three intermediate chains and several light chains.

The protein localises to the cytoplasm. It is found in the cytoskeleton. The protein resides in the cilium axoneme. In terms of biological role, may play a role in the regulation of dynein heavy chain activity. The sequence is that of Dynein intermediate chain 3, ciliary from Heliocidaris crassispina (Sea urchin).